The following is a 585-amino-acid chain: Protein FAM151A (585 aa).

The helical transmembrane segment at 14 to 34 (WVFASITCVSAVAIAAIVLAI) threads the bilayer.

This sequence belongs to the menorin family.

Its subcellular location is the membrane. The polypeptide is Protein FAM151A (FAM151A) (Pongo abelii (Sumatran orangutan)).